We begin with the raw amino-acid sequence, 611 residues long: UPF0508 protein SCY_3114 (611 aa).

The protein belongs to the UPF0508 family.

The chain is UPF0508 protein SCY_3114 from Saccharomyces cerevisiae (strain YJM789) (Baker's yeast).